Reading from the N-terminus, the 46-residue chain is Hellethionin-D (46 aa).

4 disulfide bridges follow: Cys3/Cys40, Cys4/Cys32, Cys12/Cys30, and Cys16/Cys26.

The protein belongs to the plant thionin (TC 1.C.44) family. 4 C-C subfamily.

Its subcellular location is the secreted. Its function is as follows. Thionins are small plant proteins which are toxic to animal cells. They seem to exert their toxic effect at the level of the cell membrane. Their precise function is not known. The chain is Hellethionin-D from Helleborus purpurascens (Purple hellebore).